Here is a 375-residue protein sequence, read N- to C-terminus: MPLNSLGFAKPPSETRVVVAMSGGVDSSVVAAYLADQGYDVVGVTLQLYDHGAALAKKGACCAGIDIHDARRVAEERGFPHYVLDYENIFKDAVIDEFADSYLAGATPVPCIRCNERVKFKDLLETARDLEADCMATGHYIQRKMGPNGPELHCAEDANRDQSYFLFSTTPEQLDYLRFPLGHLPSKDATREMAAQYGLAVADKPDSQDICFVPNGNYASVIEKLRPGAAEPGEIVHADGRVLGSHEGVIHYTIGQRRGLGIGGLSEPLYVVRLDVDRKQVVVGPKELLATRTIPVREINWLGDAPFTSRPEWHLSVKVRSTRPPREAIVRPISETEAEVELLTPEEGVSPGQACVFYESDGSRIFGGGWIWRGY.

ATP contacts are provided by residues 20 to 27 (AMSGGVDS) and Leu-46. Cys-114 (nucleophile) is an active-site residue. Cys-114 and Cys-211 are joined by a disulfide. ATP is bound at residue Gly-138. The tract at residues 160-162 (RDQ) is interaction with tRNA. Residue Cys-211 is the Cysteine persulfide intermediate of the active site.

This sequence belongs to the MnmA/TRMU family.

It is found in the cytoplasm. The enzyme catalyses S-sulfanyl-L-cysteinyl-[protein] + uridine(34) in tRNA + AH2 + ATP = 2-thiouridine(34) in tRNA + L-cysteinyl-[protein] + A + AMP + diphosphate + H(+). In terms of biological role, catalyzes the 2-thiolation of uridine at the wobble position (U34) of tRNA, leading to the formation of s(2)U34. The chain is tRNA-specific 2-thiouridylase MnmA from Ruegeria pomeroyi (strain ATCC 700808 / DSM 15171 / DSS-3) (Silicibacter pomeroyi).